We begin with the raw amino-acid sequence, 496 residues long: Probable zinc metalloprotease SNOG_06590 (496 aa).

An N-terminal signal peptide occupies residues 1 to 20 (MRSSMFFAVCAAAALQTALS). An N-linked (GlcNAc...) asparagine glycan is attached at asparagine 138. Zn(2+) is bound by residues histidine 161, aspartate 181, and glutamate 226. An N-linked (GlcNAc...) asparagine glycan is attached at asparagine 241. Position 253 (aspartate 253) interacts with Zn(2+). Residues asparagine 282, asparagine 361, asparagine 409, asparagine 415, and asparagine 457 are each glycosylated (N-linked (GlcNAc...) asparagine). In terms of domain architecture, Fibronectin type-III spans 402 to 496 (EPMNVGINTT…PFPFGCTRNC (95 aa)).

It belongs to the peptidase M28 family. M28B subfamily. Zn(2+) serves as cofactor.

It is found in the secreted. The chain is Probable zinc metalloprotease SNOG_06590 from Phaeosphaeria nodorum (strain SN15 / ATCC MYA-4574 / FGSC 10173) (Glume blotch fungus).